The chain runs to 426 residues: Pyruvate, phosphate dikinase regulatory protein, chloroplastic (426 aa).

The N-terminal 41 residues, 1–41, are a transit peptide targeting the chloroplast; sequence MIGCAKPLAAPLQAWARPPSPAGRRLPPSFCAPDTSPALTR. Disordered regions lie at residues 1–76 and 94–124; these read MIGC…HLDR and AALS…DGED. Residues 94 to 119 are compositionally biased toward low complexity; it reads AALSSASVSAPPVIKSPRPEDAAVAA. An ADP-binding site is contributed by 153 to 160; it reads HSVNAALG.

This sequence belongs to the pyruvate, phosphate/water dikinase regulatory protein family. PDRP subfamily. As to quaternary structure, homodimer at pH 7.5 and homotetramer at pH 8.3. Mg(2+) serves as cofactor. As to expression, leaf mesophyll-cells.

It is found in the plastid. The protein localises to the chloroplast stroma. The catalysed reaction is N(tele)-phospho-L-histidyl/L-threonyl-[pyruvate, phosphate dikinase] + ADP = N(tele)-phospho-L-histidyl/O-phospho-L-threonyl-[pyruvate, phosphate dikinase] + AMP + H(+). The enzyme catalyses N(tele)-phospho-L-histidyl/O-phospho-L-threonyl-[pyruvate, phosphate dikinase] + phosphate + H(+) = N(tele)-phospho-L-histidyl/L-threonyl-[pyruvate, phosphate dikinase] + diphosphate. Its pathway is photosynthesis; C4 acid pathway. With respect to regulation, regulated by light/dark exposure. In terms of biological role, bifunctional serine/threonine kinase and phosphorylase involved in the dark/light-mediated regulation of PPDK by catalyzing its phosphorylation/dephosphorylation. Dark/light-induced changes in stromal concentrations of the competing ADP and Pi substrates govern the direction of the reaction. In the dark, phosphorylates the catalytic intermediate of PPDK (PPDK-HisP), inactivating it. Light exposure induces the phosphorolysis reaction that reactivates PPDK. Phosphorylates PPDK at both Ser-528 and Thr-527. Can use ADP as a high specificity substrate and GDP as a lower affinity substrate, but has no activity with UDP. The chain is Pyruvate, phosphate dikinase regulatory protein, chloroplastic (PDRP1) from Zea mays (Maize).